The following is a 111-amino-acid chain: Transcription factor S (111 aa).

Zn(2+) contacts are provided by Cys4, Cys7, Cys24, Cys27, Cys72, Cys75, Cys100, and Cys103. A C4-type zinc finger spans residues 4–27 (CPKCGSMMMPRKENGKTVYKCSKC). The TFIIS-type zinc-finger motif lies at 68–108 (RGISCPSCGNDEAYFWILQTRSADEPATRFYKCTKCGKVWR).

The protein belongs to the archaeal RpoM/eukaryotic RPA12/RPB9/RPC11 RNA polymerase family.

Induces RNA cleavage activity in the RNA polymerase. In its presence, the cleavage activity of the RNA polymerase truncates the RNA back to position +15 in a stepwise manner by releasing mainly dinucleotides from the 3'-end of the nascent RNA. The truncated RNAs are able to continue elongation. Involved in transcriptional proofreading and fidelity. Misincorporation of nucleotides during elongation of transcription leads to arrested elongation complexes which are rescued by TFS-promoted removal of a dinucleotide from the 3'-end. TFS is able to induce a cleavage resynthesis cycle in stalled elongation complexes (resulting from the next missing nucleotide or a reduced incorporation rate of a wrong nucleotide) preventing misincorporation and enabling proofreading in a post-incorporation manner. Pausing of elongation complexes is the main determinant of TFS-induced RNA cleavage. The sequence is that of Transcription factor S from Sulfolobus acidocaldarius (strain ATCC 33909 / DSM 639 / JCM 8929 / NBRC 15157 / NCIMB 11770).